The primary structure comprises 348 residues: Caricain (348 aa).

The first 16 residues, 1–16, serve as a signal peptide directing secretion; it reads MAMIPSISKLLFVAIC. A propeptide spans 17-132 (activation peptide); the sequence is LFVHMSVSFG…EEFINEDTVN (116 aa). Asn86 carries N-linked (GlcNAc...) asparagine glycosylation. Intrachain disulfides connect Cys154–Cys195, Cys188–Cys227, and Cys285–Cys336. The active site involves Cys157. Cys157 is an E64 binding site. Active-site residues include His291 and Asn311.

The protein belongs to the peptidase C1 family. As to quaternary structure, monomer.

It carries out the reaction Hydrolysis of proteins with broad specificity for peptide bonds, similar to those of papain and chymopapain.. Repressed by the active-site-directed cysteine protease inhibitor E64 (L-trans-epoxysuccinyl-leucylamide-(4-guanido)-butane) produced by Aspergillus japonicus. Its function is as follows. Cysteine proteinase with a high level of diversity in substrate specificity. The chain is Caricain from Carica papaya (Papaya).